The primary structure comprises 385 residues: MMMMALSKTFGQKPVKFQLEDDGEFYMIGSEVGNYLRMFRGSLYKRYPSLWRRLATVEERKKIVASSHGKKTKPNTKDHGYTTLATSVTLLKASEVEEILDGNDEKYKAVSISTEPPTYLREQKAKRNSQWVPTLPNSSHHLDAVPCSTTINRNRMGRDKKRTFPLCFDDHDPAVIHENASQPEVLVPIRLDMEIDGQKLRDAFTWNMNEKLMTPEMFSEILCDDLDLNPLTFVPAIASAIRQQIESYPTDSILEDQSDQRVIIKLNIHVGNISLVDQFEWDMSEKENSPEKFALKLCSELGLGGEFVTTIAYSIRGQLSWHQKTYAFSENPLPTVEIAIRNTGDADQWCPLLETLTDAEMEKKIRDQDRNTRRMRRLANTAPAW.

The interval 1–113 is DNA-binding; that stretch reads MMMMALSKTF…DEKYKAVSIS (113 aa). Residues Lys-106, Lys-108, and Lys-124 each participate in a glycyl lysine isopeptide (Lys-Gly) (interchain with G-Cter in SUMO2) cross-link. Ser-129 is subject to Phosphoserine. A Glycyl lysine isopeptide (Lys-Gly) (interchain with G-Cter in SUMO2) cross-link involves residue Lys-161. The interval 183-243 is HIV-1 integrase-binding; the sequence is PEVLVPIRLD…VPAIASAIRQ (61 aa). A run of 2 repeats spans residues 186–245 and 259–319. The segment at 186 to 245 is MYC-binding; it reads LVPIRLDMEIDGQKLRDAFTWNMNEKLMTPEMFSEILCDDLDLNPLTFVPAIASAIRQQI. Residues 186-319 are 2 X approximate tandem repeats; the sequence is LVPIRLDMEI…TIAYSIRGQL (134 aa). An interaction with PPP1R15A region spans residues 304–318; sequence GGEFVTTIAYSIRGQ.

Belongs to the SNF5 family. In terms of assembly, component of the multiprotein chromatin-remodeling complexes SWI/SNF: SWI/SNF-A (BAF), SWI/SNF-B (PBAF) and related complexes. The canonical complex contains a catalytic subunit (either SMARCA4/BRG1/BAF190A or SMARCA2/BRM/BAF190B) and at least SMARCE1, ACTL6A/BAF53, SMARCC1/BAF155, SMARCC2/BAF170, and SMARCB1/SNF5/BAF47. Other subunits specific to each of the complexes may also be present permitting several possible combinations developmentally and tissue specific. Component of the BAF complex, which includes at least actin (ACTB), ARID1A/BAF250A, ARID1B/BAF250B, SMARCA2/BRM, SMARCA4/BRG1/BAF190A, ACTL6A/BAF53, ACTL6B/BAF53B, SMARCE1/BAF57 SMARCC1/BAF155, SMARCC2/BAF170, SMARCB1/SNF5/INI1, and one or more SMARCD1/BAF60A, SMARCD2/BAF60B, or SMARCD3/BAF60C. In muscle cells, the BAF complex also contains DPF3. Component of neural progenitors-specific chromatin remodeling complex (npBAF complex) composed of at least, ARID1A/BAF250A or ARID1B/BAF250B, SMARCD1/BAF60A, SMARCD3/BAF60C, SMARCA2/BRM/BAF190B, SMARCA4/BRG1/BAF190A, SMARCB1/BAF47, SMARCC1/BAF155, SMARCE1/BAF57, SMARCC2/BAF170, PHF10/BAF45A, ACTL6A/BAF53A and actin. Component of neuron-specific chromatin remodeling complex (nBAF complex) composed of at least, ARID1A/BAF250A or ARID1B/BAF250B, SMARCD1/BAF60A, SMARCD3/BAF60C, SMARCA2/BRM/BAF190B, SMARCA4/BRG1/BAF190A, SMARCB1/BAF47, SMARCC1/BAF155, SMARCE1/BAF57, SMARCC2/BAF170, DPF1/BAF45B, DPF3/BAF45C, ACTL6B/BAF53B and actin. Component of the SWI/SNF-B (PBAF) chromatin remodeling complex, at least composed of SMARCA4/BRG1, SMARCB1/BAF47/SNF5, ACTL6A/BAF53A or ACTL6B/BAF53B, SMARCE1/BAF57, SMARCD1/BAF60A, SMARCD2/BAF60B, perhaps SMARCD3/BAF60C, SMARCC1/BAF155, SMARCC2/BAF170, PBRM1/BAF180, ARID2/BAF200 and actin. Binds to double-stranded DNA. Interacts with CEBPB (when not methylated). Interacts with PIH1D1. Interacts with MYK and MAEL. Interacts with PPP1R15A. Interacts with DPF2. Interacts with YWHAZ. Interacts with ERCC6. Interacts with FOS, FOSB isoform 1 and 2, FOSL1 and FOSL2. As to quaternary structure, (Microbial infection) Binds tightly to the human immunodeficiency virus-type 1 (HIV-1) integrase in vitro and stimulates its DNA-joining activity. Interacts with human papillomavirus 18 E1 protein to stimulate its viral replication. Interacts with Epstein-Barr virus protein EBNA-2.

It localises to the nucleus. In terms of biological role, core component of the BAF (hSWI/SNF) complex. This ATP-dependent chromatin-remodeling complex plays important roles in cell proliferation and differentiation, in cellular antiviral activities and inhibition of tumor formation. The BAF complex is able to create a stable, altered form of chromatin that constrains fewer negative supercoils than normal. This change in supercoiling would be due to the conversion of up to one-half of the nucleosomes on polynucleosomal arrays into asymmetric structures, termed altosomes, each composed of 2 histones octamers. Stimulates in vitro the remodeling activity of SMARCA4/BRG1/BAF190A. Involved in activation of CSF1 promoter. Belongs to the neural progenitors-specific chromatin remodeling complex (npBAF complex) and the neuron-specific chromatin remodeling complex (nBAF complex). During neural development a switch from a stem/progenitor to a postmitotic chromatin remodeling mechanism occurs as neurons exit the cell cycle and become committed to their adult state. The transition from proliferating neural stem/progenitor cells to postmitotic neurons requires a switch in subunit composition of the npBAF and nBAF complexes. As neural progenitors exit mitosis and differentiate into neurons, npBAF complexes which contain ACTL6A/BAF53A and PHF10/BAF45A, are exchanged for homologous alternative ACTL6B/BAF53B and DPF1/BAF45B or DPF3/BAF45C subunits in neuron-specific complexes (nBAF). The npBAF complex is essential for the self-renewal/proliferative capacity of the multipotent neural stem cells. The nBAF complex along with CREST plays a role regulating the activity of genes essential for dendrite growth. Plays a key role in cell-cycle control and causes cell cycle arrest in G0/G1. This is SWI/SNF-related matrix-associated actin-dependent regulator of chromatin subfamily B member 1 (SMARCB1) from Homo sapiens (Human).